Reading from the N-terminus, the 91-residue chain is Small ribosomal subunit protein uS17 (91 aa).

The protein belongs to the universal ribosomal protein uS17 family. As to quaternary structure, part of the 30S ribosomal subunit.

In terms of biological role, one of the primary rRNA binding proteins, it binds specifically to the 5'-end of 16S ribosomal RNA. In Saccharopolyspora erythraea (strain ATCC 11635 / DSM 40517 / JCM 4748 / NBRC 13426 / NCIMB 8594 / NRRL 2338), this protein is Small ribosomal subunit protein uS17.